A 275-amino-acid polypeptide reads, in one-letter code: Glutamate racemase (275 aa).

Residues 10–11 (DS) and 42–43 (YG) contribute to the substrate site. The active-site Proton donor/acceptor is the Cys74. 75 to 76 (NT) contacts substrate. Cys189 (proton donor/acceptor) is an active-site residue. 190–191 (TH) is a binding site for substrate.

The protein belongs to the aspartate/glutamate racemases family.

It catalyses the reaction L-glutamate = D-glutamate. Its pathway is cell wall biogenesis; peptidoglycan biosynthesis. Provides the (R)-glutamate required for cell wall biosynthesis. In Bartonella tribocorum (strain CIP 105476 / IBS 506), this protein is Glutamate racemase.